Consider the following 329-residue polypeptide: PTS-dependent dihydroxyacetone kinase 1, dihydroxyacetone-binding subunit DhaK (329 aa).

The DhaK domain occupies 7 to 329 (GTDQVVEQMV…LKLPVDTIAW (323 aa)). Dihydroxyacetone contacts are provided by residues 53-56 (GSGH), K104, and D109. H56 serves as the catalytic Proton acceptor. The Tele-hemiaminal-histidine intermediate role is filled by H218.

Homodimer. The dihydroxyacetone kinase complex is composed of a homodimer of DhaM, a homodimer of DhaK and the subunit DhaL.

Its subcellular location is the cytoplasm. The enzyme catalyses dihydroxyacetone + phosphoenolpyruvate = dihydroxyacetone phosphate + pyruvate. It participates in polyol metabolism; glycerol degradation. Functionally, dihydroxyacetone binding subunit of the dihydroxyacetone kinase, which is responsible for the phosphoenolpyruvate (PEP)-dependent phosphorylation of dihydroxyacetone via a phosphoryl group transfer from DhaL-ATP. The protein is PTS-dependent dihydroxyacetone kinase 1, dihydroxyacetone-binding subunit DhaK of Listeria innocua serovar 6a (strain ATCC BAA-680 / CLIP 11262).